Reading from the N-terminus, the 409-residue chain is Nucleoprotein (409 aa).

Disordered regions lie at residues 1–32 (MASGKATGKTDAPAPVIKLGGPKPPKVGSSGN), 45–69 (NSHPPKFEGSGVPDNENLKTSQQHG), 122–145 (DVKSRSHQGTRDPDKFDQYPLRFS), 164–194 (RSGRSTAASSAASSRAPSRDGSRGRRSGSED), and 238–259 (VDQVFGPRTKGKEGNFGDDKMN). Low complexity predominate over residues 15-31 (PVIKLGGPKPPKVGSSG). The RNA-binding stretch occupies residues 29-160 (SSGNASWFQA…GNFRWDFIPL (132 aa)). A CoV N NTD domain is found at 31–156 (GNASWFQAIK…GGPDGNFRWD (126 aa)). Residues 122-138 (DVKSRSHQGTRDPDKFD) show a composition bias toward basic and acidic residues. A compositionally biased stretch (low complexity) spans 164 to 179 (RSGRSTAASSAASSRA). Basic and acidic residues-rich tracts occupy residues 180-192 (PSRDGSRGRRSGS) and 247-259 (KGKEGNFGDDKMN). Residues Ser-190 and Ser-192 each carry the phosphoserine; by host modification. Residues 219-331 (ADEMAHRRYC…QCVDGVGTRP (113 aa)) enclose the CoV N CTD domain. A dimerization region spans residues 226 to 333 (RYCKRTIPPG…VDGVGTRPKD (108 aa)). Cys-320 and Cys-323 are disulfide-bonded. Residues 326-409 (GVGTRPKDDE…GDSALGENEL (84 aa)) form a disordered region. The span at 341 to 357 (RSSSRPATRTSSPAPRQ) shows a compositional bias: low complexity. Over residues 358–367 (QRPKKEKKPK) the composition is skewed to basic residues. A Phosphothreonine; by host modification is found at Thr-378. The residue at position 379 (Ser-379) is a Phosphoserine; by host.

The protein belongs to the gammacoronavirus nucleocapsid protein family. In terms of assembly, homooligomer. Both monomeric and oligomeric forms interact with RNA. Interacts with protein M. Interacts with NSP3; this interaction serves to tether the genome to the newly translated replicase-transcriptase complex at a very early stage of infection. ADP-ribosylated. The ADP-ribosylation is retained in the virion during infection. Post-translationally, phosphorylated on serine and threonine residues.

The protein resides in the virion. It localises to the host endoplasmic reticulum-Golgi intermediate compartment. It is found in the host Golgi apparatus. Functionally, packages the positive strand viral genome RNA into a helical ribonucleocapsid (RNP) and plays a fundamental role during virion assembly through its interactions with the viral genome and membrane protein M. Plays an important role in enhancing the efficiency of subgenomic viral RNA transcription as well as viral replication. The protein is Nucleoprotein of Avian infectious bronchitis virus (strain Arkansas 99) (IBV).